The sequence spans 107 residues: MDLNNRLSEDETLEQAYDIFLELAVDNLDPADVILFNLQFEERGGAELHDPAEDWAEHVDFDLNPDFFAEVLIGLGEADGEPITDVFARVLICREKDHKLCHILWKE.

The protein belongs to the putative dsDNA mimic protein family.

In terms of biological role, may act as a double-stranded DNA (dsDNA) mimic. Probably regulates the activity of a dsDNA-binding protein. This is Putative double-stranded DNA mimic protein ETA_15890 from Erwinia tasmaniensis (strain DSM 17950 / CFBP 7177 / CIP 109463 / NCPPB 4357 / Et1/99).